Reading from the N-terminus, the 364-residue chain is DNA replication and repair protein RecF (364 aa).

Residue 30–37 (GNNGQGKT) coordinates ATP.

Belongs to the RecF family.

It localises to the cytoplasm. Functionally, the RecF protein is involved in DNA metabolism; it is required for DNA replication and normal SOS inducibility. RecF binds preferentially to single-stranded, linear DNA. It also seems to bind ATP. This Geotalea daltonii (strain DSM 22248 / JCM 15807 / FRC-32) (Geobacter daltonii) protein is DNA replication and repair protein RecF.